The sequence spans 1293 residues: MFGFLIGVFFDRREESKCEPLVKHAPAIEPEASEAENYPLSSSADDKILAEALDAVETTILGSGSCLHVTDTAAMPPAGDSAAAAVMMGSHSPGDRLMIEALESVEASRGLTHSADTCSQRCSIALSAPQSPQSRVPEGPIMDSGQIFAVSGAGEEENWIDDEDMALCAADLQIDPIGDAQSVGGSTAACLPPSQKEEIRILYATDGYPVVCSLHLLLGQALLQELYVIAYSHVTEPSAHGGGLLRATFYLLAATGCERQRQRVRPVFVCSFTGEAADKTREALREGKPLMVQDVIASLDEAQSLALHEDLIIALGTICSAGKTAAAPGGDERNLSYNYVASTLPGLRRTLASLMLQYETRVVAAFRRKYNASFSCPFWFVSKFGPSETSLVAVLRYYLLGATQDDGIAGSFDLQGVKDLAVTFPKPGANASGLTAARLNTFAEFSRFWCCSELAGPKAEKLFREYLKTRVSSDTLYVQSLDSLIEKYRHALRLPAKDFVRFVYLAYHEGYNRAAVEAHMEEALRNGGRAETAATRAQSEFFKGLREMCSMPEYFARNVDVAVKRLPVRVAEEHARLRSYGEIPRSGFWGFCWPSYDVSLRINKICAGPLCCLGTQLADAMVRAPPDDGDKGTCAETAATIIHHDSDASGEEEATVKVCGAHMPRANKRAGDGTRISPACNEADTRAPLARLTALAYSDQRPRGIMPVTLLLYSLDDTSSGADTAVKSEAKAQDRPVPVYRVAMPGGGQAFAVVARDQWDKTVTVDVFSGFMAPKSPPESNGPLGSDKDAAAVDDAWTRALLARAWGTSYARRCAANVGASQLYLNRNEVLSDSLAVCNLPLDLDITLKPSSVGRPSMLTLHMAMRSVREAIVLLWSLLFADAEIDPDTYPVYFYKTQCDAAAGDEEASPQRRGVGGGDDDVAWGEEDVEIEEMWGGYYSQTAMNDDMIWDDAPDPQMDIDSDHPAHEPMDDGAGAAIEEMKTAAAARFCRCERKIGFRICVPIPKPYALAGLSVAKATSALVQQAIVLQEKFVEALDQFIADYEFVDSGVYSAGRSLRLPFFAKVNARGVMVGRLLPFLVFPPKCRDRSEFVAQHADPNNFHVGAARRDNPAPTLIITSVTVRRDVLAQDNRAHGKPRAGTARLADALAAVGIVPGNQQGTPGDACAVDASWLLDSVAMPALREYIDEHFPRHAAEYRDARTDCIRVYEGRICAALRRGGAGYMSGRRSNFTCLKYQHRGASMQTVIASVVVAVNSQGLPYAALQTRCFATKCGSNELQTQFTVTLSATKDV.

The segment at 1234 to 1274 adopts a CHC2-type zinc-finger fold; sequence CLKYQHRGASMQTVIASVVVAVNSQGLPYAALQTRCFATKC.

The protein belongs to the herpesviridae DNA primase family. Associates with the helicase and the primase-associated factor to form the helicase-primase factor.

It localises to the host nucleus. In terms of biological role, essential component of the helicase/primase complex. Unwinds the DNA at the replication forks and generates single-stranded DNA for both leading and lagging strand synthesis. The primase initiates primer synthesis and thereby produces large amount of short RNA primers on the lagging strand that the polymerase elongates using dNTPs. This Psittacid herpesvirus 1 (isolate Amazon parrot/-/97-0001/1997) (PsHV-1) protein is DNA primase (UL52).